The following is a 475-amino-acid chain: Beta-amyrin 6-beta-monooxygenase (475 aa).

The chain crosses the membrane as a helical span at residues Leu6 to Phe22. Cys423 contributes to the heme binding site.

The protein belongs to the cytochrome P450 family. Heme is required as a cofactor. As to expression, specifically expressed in roots.

It is found in the membrane. It catalyses the reaction beta-amyrin + reduced [NADPH--hemoprotein reductase] + O2 = daturadiol + oxidized [NADPH--hemoprotein reductase] + H2O + H(+). Catalyzes the C-6 beta-hydroxylation of beta-amyrin to form daturadiol. Catalyzes the C-6 beta-hydroxylation of alpha-amyrin to form 6-beta-hydroxy-alpha-amyrin. The sequence is that of Beta-amyrin 6-beta-monooxygenase from Solanum lycopersicum (Tomato).